Reading from the N-terminus, the 251-residue chain is MRSGVIAQKVGMTRVFTDAGEHVPVTVLKVDQCQVVAHRTVEKNGYVALQVGVGKAKVKNVSKAERGRFAIAKVEPKRKLAEFRVSEDALIPVGAEITADHFIPGQFVDVTGITTGKGFAGGMKRWNFGGLRASHGVSISHRSIGSTGGRQDPGKTFKNKKMPGHLGVERVTTQNLRVVRTDPERGLILVEGAVPGVAGGWIHVRDAVKRKLPAEAPMPGKFRELADGAAPAGAVQAAQAAPEAPAAEENA.

Disordered stretches follow at residues serine 140 to methionine 162 and alanine 229 to alanine 251. At glutamine 151 the chain carries N5-methylglutamine.

The protein belongs to the universal ribosomal protein uL3 family. In terms of assembly, part of the 50S ribosomal subunit. Forms a cluster with proteins L14 and L19. In terms of processing, methylated by PrmB.

One of the primary rRNA binding proteins, it binds directly near the 3'-end of the 23S rRNA, where it nucleates assembly of the 50S subunit. The sequence is that of Large ribosomal subunit protein uL3 from Methylobacterium nodulans (strain LMG 21967 / CNCM I-2342 / ORS 2060).